Reading from the N-terminus, the 121-residue chain is Small ribosomal subunit protein uS13 (121 aa).

Residues 94–121 form a disordered region; that stretch reads GLPVRGQNTKNNSRTRKGPRRTVANKKK. Over residues 106–121 the composition is skewed to basic residues; sequence SRTRKGPRRTVANKKK.

It belongs to the universal ribosomal protein uS13 family. As to quaternary structure, part of the 30S ribosomal subunit. Forms a loose heterodimer with protein S19. Forms two bridges to the 50S subunit in the 70S ribosome.

In terms of biological role, located at the top of the head of the 30S subunit, it contacts several helices of the 16S rRNA. In the 70S ribosome it contacts the 23S rRNA (bridge B1a) and protein L5 of the 50S subunit (bridge B1b), connecting the 2 subunits; these bridges are implicated in subunit movement. Contacts the tRNAs in the A and P-sites. In Exiguobacterium sibiricum (strain DSM 17290 / CCUG 55495 / CIP 109462 / JCM 13490 / 255-15), this protein is Small ribosomal subunit protein uS13.